Reading from the N-terminus, the 647-residue chain is Macrolide export ATP-binding/permease protein MacB 2 (647 aa).

Positions 6 to 244 (IQLKGIERRY…VTPTAAPAGK (239 aa)) constitute an ABC transporter domain. Position 42–49 (42–49 (GASGSGKS)) interacts with ATP. Positions 223–247 (QEDSGRKPAAVPVTPTAAPAGKEGV) are disordered. Residues 230–242 (PAAVPVTPTAAPA) show a composition bias toward low complexity. Helical transmembrane passes span 273–293 (FLTM…VALG), 527–547 (IAVI…LVSV), 581–601 (LGGM…SLFV), and 610–630 (LFSI…FGYL).

It belongs to the ABC transporter superfamily. Macrolide exporter (TC 3.A.1.122) family. Homodimer. Part of the tripartite efflux system MacAB-TolC, which is composed of an inner membrane transporter, MacB, a periplasmic membrane fusion protein, MacA, and an outer membrane component, TolC. The complex forms a large protein conduit and can translocate molecules across both the inner and outer membranes. Interacts with MacA.

The protein localises to the cell inner membrane. Its function is as follows. Part of the tripartite efflux system MacAB-TolC. MacB is a non-canonical ABC transporter that contains transmembrane domains (TMD), which form a pore in the inner membrane, and an ATP-binding domain (NBD), which is responsible for energy generation. Confers resistance against macrolides. The sequence is that of Macrolide export ATP-binding/permease protein MacB 2 from Aeromonas hydrophila subsp. hydrophila (strain ATCC 7966 / DSM 30187 / BCRC 13018 / CCUG 14551 / JCM 1027 / KCTC 2358 / NCIMB 9240 / NCTC 8049).